Reading from the N-terminus, the 289-residue chain is F-box protein PP2-A11 (289 aa).

Residues 23 to 69 enclose the F-box domain; that stretch reads QPGLGDLPESCVALILQNLDPVEICRFSKLNTAFHGASWADFVWESK.

Part of a SCF (ASK-cullin-F-box) protein ligase complex. Interacts with SKP1A/ASK1.

It is found in the nucleus. Its pathway is protein modification; protein ubiquitination. Functionally, component of SCF(ASK-cullin-F-box) E3 ubiquitin ligase complexes, which may mediate the ubiquitination and subsequent proteasomal degradation of target proteins. In Arabidopsis thaliana (Mouse-ear cress), this protein is F-box protein PP2-A11 (PP2A11).